The sequence spans 265 residues: MTDAGKTARLNRISTDDRLLTIPMDHGITLGAIDGLVDIEATIREVTANGADAVLTQPGIAPRVHPNKGDAGYIVHLNASTTLGPDQTDKRRTGTVEDAVRAGADAVSFHINVGSDHEPDQITALADVAADADRLGVPVLAMAYARGPGVDEHDAANLGHAVRLAEEVGADVIKTAYSGSTESFQRVVDATAKPVIIAGGDPAGDRETLQGIRDAMDAGAAGVSTGRTVFQHATPGAMTAAISAVVHDDADPEAALARAGLVVDA.

Catalysis depends on aspartate 25, which acts as the Proton acceptor. 1-deoxy-D-threo-hexo-2,5-diulose 6-phosphate contacts are provided by residues 25 to 29 and 144 to 146; these read DHGIT and YAR. Residue tyrosine 144 is the Proton donor of the active site. Lysine 174 (schiff-base intermediate with substrate) is an active-site residue. 1-deoxy-D-threo-hexo-2,5-diulose 6-phosphate is bound by residues 199 to 200 and 226 to 227; these read GG and GR.

The protein belongs to the DeoC/FbaB aldolase family. ADHS subfamily. In terms of assembly, homodecamer.

It carries out the reaction 1-deoxy-D-threo-hexo-2,5-diulose 6-phosphate + L-aspartate 4-semialdehyde = 2,3-dioxopropyl phosphate + 2-amino-2,3,7-trideoxy-D-lyxo-hept-6-ulosonate. Functionally, catalyzes a transaldol reaction between 6-deoxy-5-ketofructose 1-phosphate (DKFP) and L-aspartate semialdehyde (ASA) with an elimination of hydroxypyruvaldehyde phosphate to yield 2-amino-3,7-dideoxy-D-threo-hept-6-ulosonate (ADH). Plays a key role in an alternative pathway of the biosynthesis of 3-dehydroquinate (DHQ), which is involved in the canonical pathway for the biosynthesis of aromatic amino acids. This Halobacterium salinarum (strain ATCC 700922 / JCM 11081 / NRC-1) (Halobacterium halobium) protein is 2-amino-3,7-dideoxy-D-threo-hept-6-ulosonate synthase.